A 108-amino-acid chain; its full sequence is Nucleoid-associated protein Rmet_2128 (108 aa).

The segment covering 86–96 has biased composition (polar residues); it reads TTQEKMGSMTS. The disordered stretch occupies residues 86–108; the sequence is TTQEKMGSMTSGLPLPPGFKLPF. Over residues 99–108 the composition is skewed to pro residues; the sequence is PLPPGFKLPF.

This sequence belongs to the YbaB/EbfC family. In terms of assembly, homodimer.

The protein resides in the cytoplasm. It is found in the nucleoid. In terms of biological role, binds to DNA and alters its conformation. May be involved in regulation of gene expression, nucleoid organization and DNA protection. The protein is Nucleoid-associated protein Rmet_2128 of Cupriavidus metallidurans (strain ATCC 43123 / DSM 2839 / NBRC 102507 / CH34) (Ralstonia metallidurans).